The following is a 225-amino-acid chain: Small ribosomal subunit protein uS7 (225 aa).

N-acetylserine is present on Ser-2. Phosphothreonine is present on Thr-27. Glycyl lysine isopeptide (Lys-Gly) (interchain with G-Cter in ubiquitin) cross-links involve residues Lys-45 and Lys-203.

Belongs to the universal ribosomal protein uS7 family. As to quaternary structure, component of the small ribosomal subunit (SSU). Mature yeast ribosomes consist of a small (40S) and a large (60S) subunit. The 40S small subunit contains 1 molecule of ribosomal RNA (18S rRNA) and 33 different proteins (encoded by 57 genes). The large 60S subunit contains 3 rRNA molecules (25S, 5.8S and 5S rRNA) and 46 different proteins (encoded by 81 genes). N-terminally acetylated by acetyltransferase NatA.

It localises to the cytoplasm. Functionally, component of the ribosome, a large ribonucleoprotein complex responsible for the synthesis of proteins in the cell. The small ribosomal subunit (SSU) binds messenger RNAs (mRNAs) and translates the encoded message by selecting cognate aminoacyl-transfer RNA (tRNA) molecules. The large subunit (LSU) contains the ribosomal catalytic site termed the peptidyl transferase center (PTC), which catalyzes the formation of peptide bonds, thereby polymerizing the amino acids delivered by tRNAs into a polypeptide chain. The nascent polypeptides leave the ribosome through a tunnel in the LSU and interact with protein factors that function in enzymatic processing, targeting, and the membrane insertion of nascent chains at the exit of the ribosomal tunnel. This is Small ribosomal subunit protein uS7 from Saccharomyces cerevisiae (strain ATCC 204508 / S288c) (Baker's yeast).